Here is a 143-residue protein sequence, read N- to C-terminus: Transcriptional regulator MraZ (143 aa).

SpoVT-AbrB domains follow at residues 5–47 (TFTP…PRNV) and 76–119 (ADEQ…NAES).

This sequence belongs to the MraZ family. As to quaternary structure, forms oligomers.

The protein localises to the cytoplasm. The protein resides in the nucleoid. In Corynebacterium kroppenstedtii (strain DSM 44385 / JCM 11950 / CIP 105744 / CCUG 35717), this protein is Transcriptional regulator MraZ.